The following is a 367-amino-acid chain: RNA-binding protein 48 (367 aa).

The 79-residue stretch at 46 to 124 (QYLLIQGVPA…GLLHVCYAPE (79 aa)) folds into the RRM domain. 3 disordered regions span residues 217–243 (PVDRAPDSSKDGRNHHKTMGHYNHNDS), 280–302 (QLQERKRRREDDRKLGTFLQTNP), and 343–367 (SVPKPPEDKPEDVHTSHPLKQRRRI). Positions 347–357 (PPEDKPEDVHT) are enriched in basic and acidic residues.

It belongs to the RBM48 family. Component of the minor spliceosome. Within this complex, interacts with ARMC7 and PRPF8/PRP8.

In terms of biological role, as a component of the minor spliceosome, involved in the splicing of U12-type introns in pre-mRNAs. In Homo sapiens (Human), this protein is RNA-binding protein 48 (RBM48).